Consider the following 490-residue polypeptide: Phenylacetaldehyde synthase (490 aa).

L-phenylalanine is bound by residues Pro-92, His-193, and His-308. Lys-309 is subject to N6-(pyridoxal phosphate)lysine. Phe-338 lines the L-phenylalanine pocket.

This sequence belongs to the group II decarboxylase family. Homodimer. Requires pyridoxal 5'-phosphate as cofactor. As to expression, expressed in roots, rosette leaves, stems, cauline leaves and flowers.

The catalysed reaction is L-phenylalanine + O2 + H2O + H(+) = 2-phenylacetaldehyde + H2O2 + NH4(+) + CO2. It carries out the reaction L-dopa + O2 + H2O + H(+) = 3,4-dihydroxyphenylacetaldehyde + H2O2 + NH4(+) + CO2. In terms of biological role, bifunctional enzyme that catalyzes the decarboxylation of L-phenylalanine to 2-phenylethylamine, which is then oxidized to form 2-phenylacetaldehyde, a constituent of floral scent. 2-phenylacetaldehyde is a precursor of 2-phenylethanol, another constituent of floral scent. Catalyzes both the decarboxylation and deamination of L-dopa to 3,4-dihydroxylphenylacetaldehyde (DHPAA). The protein is Phenylacetaldehyde synthase of Arabidopsis thaliana (Mouse-ear cress).